The primary structure comprises 204 residues: ADP-ribosylation factor-like protein 15 (204 aa).

GTP is bound by residues 39–46 (GLTGSGKT), 82–86 (ELGGA), and 142–145 (NHQD).

This sequence belongs to the small GTPase superfamily. Arf family.

This Pongo abelii (Sumatran orangutan) protein is ADP-ribosylation factor-like protein 15 (ARL15).